The following is a 75-amino-acid chain: Exodeoxyribonuclease 7 small subunit (75 aa).

It belongs to the XseB family. Heterooligomer composed of large and small subunits.

Its subcellular location is the cytoplasm. It carries out the reaction Exonucleolytic cleavage in either 5'- to 3'- or 3'- to 5'-direction to yield nucleoside 5'-phosphates.. Its function is as follows. Bidirectionally degrades single-stranded DNA into large acid-insoluble oligonucleotides, which are then degraded further into small acid-soluble oligonucleotides. This is Exodeoxyribonuclease 7 small subunit from Anaplasma phagocytophilum (strain HZ).